Consider the following 372-residue polypeptide: ATP phosphoribosyltransferase regulatory subunit (372 aa).

It belongs to the class-II aminoacyl-tRNA synthetase family. HisZ subfamily. In terms of assembly, heteromultimer composed of HisG and HisZ subunits.

The protein resides in the cytoplasm. Its pathway is amino-acid biosynthesis; L-histidine biosynthesis; L-histidine from 5-phospho-alpha-D-ribose 1-diphosphate: step 1/9. Required for the first step of histidine biosynthesis. May allow the feedback regulation of ATP phosphoribosyltransferase activity by histidine. The polypeptide is ATP phosphoribosyltransferase regulatory subunit (Rhizobium rhizogenes (strain K84 / ATCC BAA-868) (Agrobacterium radiobacter)).